Consider the following 304-residue polypeptide: tRNA pseudouridine synthase B (304 aa).

The Nucleophile role is filled by Asp-44.

It belongs to the pseudouridine synthase TruB family. Type 1 subfamily.

The catalysed reaction is uridine(55) in tRNA = pseudouridine(55) in tRNA. In terms of biological role, responsible for synthesis of pseudouridine from uracil-55 in the psi GC loop of transfer RNAs. This is tRNA pseudouridine synthase B from Novosphingobium aromaticivorans (strain ATCC 700278 / DSM 12444 / CCUG 56034 / CIP 105152 / NBRC 16084 / F199).